A 429-amino-acid chain; its full sequence is Histidinol dehydrogenase (429 aa).

The NAD(+) site is built by tyrosine 130, glutamine 191, and asparagine 214. 3 residues coordinate substrate: serine 237, glutamine 259, and histidine 262. Glutamine 259 and histidine 262 together coordinate Zn(2+). Residues glutamate 327 and histidine 328 each act as proton acceptor in the active site. Positions 328, 361, 415, and 420 each coordinate substrate. Aspartate 361 contacts Zn(2+). Position 420 (histidine 420) interacts with Zn(2+).

The protein belongs to the histidinol dehydrogenase family. Requires Zn(2+) as cofactor.

The enzyme catalyses L-histidinol + 2 NAD(+) + H2O = L-histidine + 2 NADH + 3 H(+). It participates in amino-acid biosynthesis; L-histidine biosynthesis; L-histidine from 5-phospho-alpha-D-ribose 1-diphosphate: step 9/9. Its function is as follows. Catalyzes the sequential NAD-dependent oxidations of L-histidinol to L-histidinaldehyde and then to L-histidine. The sequence is that of Histidinol dehydrogenase from Geobacter sulfurreducens (strain ATCC 51573 / DSM 12127 / PCA).